We begin with the raw amino-acid sequence, 244 residues long: DNA repair protein RecO (244 aa).

It belongs to the RecO family.

Functionally, involved in DNA repair and RecF pathway recombination. The sequence is that of DNA repair protein RecO from Myxococcus xanthus (strain DK1622).